A 369-amino-acid chain; its full sequence is Glutamate 5-kinase (369 aa).

Lys-14 lines the ATP pocket. Substrate-binding residues include Ser-56, Asp-143, and Asn-155. ATP-binding positions include 175–176 (SD) and 215–221 (TGGMASK). The 75-residue stretch at 277-351 (AGKIRLDQGA…GMKTQELPDD (75 aa)) folds into the PUA domain.

It belongs to the glutamate 5-kinase family.

Its subcellular location is the cytoplasm. It catalyses the reaction L-glutamate + ATP = L-glutamyl 5-phosphate + ADP. Its pathway is amino-acid biosynthesis; L-proline biosynthesis; L-glutamate 5-semialdehyde from L-glutamate: step 1/2. In terms of biological role, catalyzes the transfer of a phosphate group to glutamate to form L-glutamate 5-phosphate. The protein is Glutamate 5-kinase of Corynebacterium efficiens (strain DSM 44549 / YS-314 / AJ 12310 / JCM 11189 / NBRC 100395).